We begin with the raw amino-acid sequence, 174 residues long: Actin-related protein 2/3 complex subunit 3 (174 aa).

This sequence belongs to the ARPC3 family. Component of the Arp2/3 complex composed of arpB/Arp2, arpC/Arp3, arcA/p41-arc, arcB/p34-arc, arcC/p21-arc, arcD/p20-arc and arcE/p16-arc. Interacts with carmil (via the region between the LRR domain and COOH-terminal proline-rich domain); carmil is required for Arp2/3-dependent actin nucleation. Arp2/3 complex, MyoB, MyoC, and the alpha and beta subunits of capping protein all form a larger complex with carmil.

It localises to the cytoplasm. The protein resides in the cytoskeleton. The protein localises to the cytosol. It is found in the cell cortex. Its subcellular location is the cell projection. It localises to the pseudopodium. Functions as a component of the Arp2/3 complex which is involved in regulation of actin polymerization and together with an activating nucleation-promoting factor (NPF) mediates the formation of branched actin networks. Seems to contact the pointed end of the daughter actin filament. The Arp2/3 complex is involved in organizing the actin system in cell motility and chemotaxis, in phagocytosis and macropinocytosis, at late steps of endosome processing, and in mitosis. In concert with a group of other proteins, the Arp2/3 complex plays a general role in the rapid activation and adaptation of the actin system to its multiple functions. The chain is Actin-related protein 2/3 complex subunit 3 (arcC) from Dictyostelium discoideum (Social amoeba).